The primary structure comprises 337 residues: Anthranilate phosphoribosyltransferase (337 aa).

5-phospho-alpha-D-ribose 1-diphosphate is bound by residues glycine 81, 84-85 (GD), serine 89, 91-94 (NVST), 109-117 (KHGNRAATS), and alanine 121. Residue glycine 81 participates in anthranilate binding. Mg(2+) is bound at residue serine 93. Residue asparagine 112 coordinates anthranilate. Arginine 167 provides a ligand contact to anthranilate. Aspartate 226 and glutamate 227 together coordinate Mg(2+).

Belongs to the anthranilate phosphoribosyltransferase family. As to quaternary structure, homodimer. The cofactor is Mg(2+).

It catalyses the reaction N-(5-phospho-beta-D-ribosyl)anthranilate + diphosphate = 5-phospho-alpha-D-ribose 1-diphosphate + anthranilate. The protein operates within amino-acid biosynthesis; L-tryptophan biosynthesis; L-tryptophan from chorismate: step 2/5. Functionally, catalyzes the transfer of the phosphoribosyl group of 5-phosphorylribose-1-pyrophosphate (PRPP) to anthranilate to yield N-(5'-phosphoribosyl)-anthranilate (PRA). This chain is Anthranilate phosphoribosyltransferase, found in Methylorubrum populi (strain ATCC BAA-705 / NCIMB 13946 / BJ001) (Methylobacterium populi).